Reading from the N-terminus, the 793-residue chain is Serine/threonine-protein kinase MARK1 (793 aa).

Positions 1-40 (MSARTPLPTVNERDTENHTSVDGYTETHIPPTKSSSRQNI) are disordered. At Thr-5 the chain carries Phosphothreonine. The Protein kinase domain maps to 60–311 (YRLQKTIGKG…LEQIMKDRWM (252 aa)). ATP contacts are provided by residues 66-74 (IGKGNFAKV) and Lys-89. Asp-182 functions as the Proton acceptor in the catalytic mechanism. Thr-208 carries the post-translational modification Phosphothreonine. A Phosphothreonine; by LKB1 and TAOK1 modification is found at Thr-215. The residue at position 219 (Ser-219) is a Phosphoserine; by GSK3-beta. A UBA domain is found at 329 to 370 (DLNDAKRIDIMVTMGFARDEINDALVSQKYDEVMATYILLGR). Disordered stretches follow at residues 377-499 (GGES…GGSM) and 517-697 (LQNG…KPRS). Residues 380-403 (SLSSGNLCQRSRPSSDLNNSTLQS) show a composition bias toward polar residues. Phosphoserine occurs at positions 382, 390, 393, 403, 423, and 444. Basic and acidic residues predominate over residues 447–459 (SEQKEEWDKDTAR). The segment covering 462–473 (GSTTVGSKSEVT) has biased composition (polar residues). Ser-475 is modified (phosphoserine). The span at 487-499 (AGPSNNVYSGGSM) shows a compositional bias: polar residues. 2 stretches are compositionally biased toward low complexity: residues 523–547 (SSLT…GPSA) and 585–599 (PAAS…ASTP). Position 588 is a phosphoserine (Ser-588). Phosphothreonine; by PKC/PRKCZ is present on Thr-613. A compositionally biased stretch (polar residues) spans 647 to 657 (GTSTGIISKIT). Basic and acidic residues-rich tracts occupy residues 661–676 (VRRD…RTDT) and 683–695 (EPKD…EAKP). Residue Ser-666 is modified to Phosphoserine. The KA1 domain maps to 744–793 (DARQDSLVQWEMEVCKLPRLSLNGVRFKRISGTSIAFKNIASKIANELKL).

This sequence belongs to the protein kinase superfamily. CAMK Ser/Thr protein kinase family. SNF1 subfamily. Interacts with MAPT/TAU. Requires Mg(2+) as cofactor. In terms of processing, phosphorylation at Thr-613 by PRKCZ/aPKC in polarized epithelial cells inhibits the kinase activity. Phosphorylated at Thr-215 by STK11/LKB1 in complex with STE20-related adapter-alpha (STRADA) pseudo kinase and CAB39. Phosphorylation at Thr-215 by TAOK1 activates the kinase activity, leading to phosphorylation and detachment of MAPT/TAU from microtubules. Phosphorylation at Ser-219 by GSK3-beta (GSK3B) inhibits the kinase activity. Highly expressed in brain and spleen and at lower levels in kidney and skeletal muscle.

Its subcellular location is the cell membrane. It localises to the cytoplasm. It is found in the cytoskeleton. The protein resides in the cell projection. The protein localises to the dendrite. The enzyme catalyses L-seryl-[protein] + ATP = O-phospho-L-seryl-[protein] + ADP + H(+). It carries out the reaction L-threonyl-[protein] + ATP = O-phospho-L-threonyl-[protein] + ADP + H(+). It catalyses the reaction L-seryl-[tau protein] + ATP = O-phospho-L-seryl-[tau protein] + ADP + H(+). The catalysed reaction is L-threonyl-[tau protein] + ATP = O-phospho-L-threonyl-[tau protein] + ADP + H(+). Activated by phosphorylation on Thr-215. Inhibited by phosphorylation at Ser-219. Functionally, serine/threonine-protein kinase. Involved in cell polarity and microtubule dynamics regulation. Phosphorylates DCX, MAP2 and MAP4. Phosphorylates the microtubule-associated protein MAPT/TAU. Involved in cell polarity by phosphorylating the microtubule-associated proteins MAP2, MAP4 and MAPT/TAU at KXGS motifs, causing detachment from microtubules, and their disassembly. Involved in the regulation of neuronal migration through its dual activities in regulating cellular polarity and microtubule dynamics, possibly by phosphorylating and regulating DCX. Also acts as a positive regulator of the Wnt signaling pathway, probably by mediating phosphorylation of dishevelled proteins (DVL1, DVL2 and/or DVL3). The protein is Serine/threonine-protein kinase MARK1 of Rattus norvegicus (Rat).